Reading from the N-terminus, the 169-residue chain is Succinate dehydrogenase cytochrome b560 subunit, mitochondrial (169 aa).

The N-terminal 29 residues, methionine 1–proline 29, are a transit peptide targeting the mitochondrion. At leucine 30–methionine 65 the chain is on the mitochondrial matrix side. A helical membrane pass occupies residues alanine 66–leucine 90. Residues leucine 91 to proline 110 lie on the Mitochondrial intermembrane side of the membrane. Residues alanine 111–leucine 139 traverse the membrane as a helical segment. Histidine 127 is a heme b binding site. The Mitochondrial matrix segment spans residues glycine 140 to proline 146. The helical transmembrane segment at glutamine 147–alanine 167 threads the bilayer. Over alanine 168–methionine 169 the chain is Mitochondrial intermembrane.

It belongs to the cytochrome b560 family. In terms of assembly, component of complex II composed of four subunits: the flavoprotein (FP) SDHA, iron-sulfur protein (IP) SDHB, and a cytochrome b560 composed of SDHC and SDHD. Heme b serves as cofactor.

It is found in the mitochondrion inner membrane. The protein operates within carbohydrate metabolism; tricarboxylic acid cycle. In terms of biological role, membrane-anchoring subunit of succinate dehydrogenase (SDH) that is involved in complex II of the mitochondrial electron transport chain and is responsible for transferring electrons from succinate to ubiquinone (coenzyme Q). SDH also oxidizes malate to the non-canonical enol form of oxaloacetate, enol-oxaloacetate. Enol-oxaloacetate, which is a potent inhibitor of the succinate dehydrogenase activity, is further isomerized into keto-oxaloacetate. The polypeptide is Succinate dehydrogenase cytochrome b560 subunit, mitochondrial (SDHC) (Homo sapiens (Human)).